The chain runs to 195 residues: HTH-type transcriptional regulator BetI (195 aa).

The HTH tetR-type domain maps to 8-68 (SIRRRQLIDA…ATMRDITSQL (61 aa)). Positions 31–50 (TIAQIARRAGVSTGIISHYF) form a DNA-binding region, H-T-H motif.

It functions in the pathway amine and polyamine biosynthesis; betaine biosynthesis via choline pathway [regulation]. Repressor involved in the biosynthesis of the osmoprotectant glycine betaine. It represses transcription of the choline transporter BetT and the genes of BetAB involved in the synthesis of glycine betaine. In Escherichia coli (strain SMS-3-5 / SECEC), this protein is HTH-type transcriptional regulator BetI.